The primary structure comprises 235 residues: Small ribosomal subunit protein uS2c (235 aa).

The protein belongs to the universal ribosomal protein uS2 family.

The protein localises to the plastid. It localises to the chloroplast. The chain is Small ribosomal subunit protein uS2c (rps2) from Guillardia theta (Cryptophyte).